A 247-amino-acid polypeptide reads, in one-letter code: Triosephosphate isomerase (247 aa).

Substrate-binding residues include asparagine 10 and lysine 12. Histidine 94 functions as the Electrophile in the catalytic mechanism. Glutamate 164 (proton acceptor) is an active-site residue.

This sequence belongs to the triosephosphate isomerase family. As to quaternary structure, homodimer.

The catalysed reaction is D-glyceraldehyde 3-phosphate = dihydroxyacetone phosphate. It participates in carbohydrate biosynthesis; gluconeogenesis. Its pathway is carbohydrate degradation; glycolysis; D-glyceraldehyde 3-phosphate from glycerone phosphate: step 1/1. In Drosophila melanogaster (Fruit fly), this protein is Triosephosphate isomerase (Tpi).